We begin with the raw amino-acid sequence, 374 residues long: Protein-glutamate methylesterase/protein-glutamine glutaminase (374 aa).

A Response regulatory domain is found at 4-121 (KVLVVDDSGF…SRNPDKVKQM (118 aa)). Aspartate 55 is subject to 4-aspartylphosphate. The disordered stretch occupies residues 144–186 (PVAAPVPASSPAPASSFASPAPARPAATARAAAPAASHSPAPK). Over residues 154–183 (PAPASSFASPAPARPAATARAAAPAASHSP) the composition is skewed to low complexity. In terms of domain architecture, CheB-type methylesterase spans 183–374 (PAPKRKPYKL…IGKHLVEACV (192 aa)). Catalysis depends on residues serine 198, histidine 225, and aspartate 318.

This sequence belongs to the CheB family. Post-translationally, phosphorylated by CheA. Phosphorylation of the N-terminal regulatory domain activates the methylesterase activity.

It is found in the cytoplasm. It carries out the reaction [protein]-L-glutamate 5-O-methyl ester + H2O = L-glutamyl-[protein] + methanol + H(+). It catalyses the reaction L-glutaminyl-[protein] + H2O = L-glutamyl-[protein] + NH4(+). Functionally, involved in chemotaxis. Part of a chemotaxis signal transduction system that modulates chemotaxis in response to various stimuli. Catalyzes the demethylation of specific methylglutamate residues introduced into the chemoreceptors (methyl-accepting chemotaxis proteins or MCP) by CheR. Also mediates the irreversible deamidation of specific glutamine residues to glutamic acid. This Pseudomonas putida (Arthrobacter siderocapsulatus) protein is Protein-glutamate methylesterase/protein-glutamine glutaminase.